Here is a 400-residue protein sequence, read N- to C-terminus: Acetate kinase (400 aa).

Asn-9 contributes to the Mg(2+) binding site. Residue Lys-16 coordinates ATP. Position 90 (Arg-90) interacts with substrate. Asp-147 (proton donor/acceptor) is an active-site residue. Residues 207-211 (HIGNG), 282-284 (DLR), and 330-334 (GIGEN) contribute to the ATP site. Glu-385 is a binding site for Mg(2+).

Belongs to the acetokinase family. In terms of assembly, homodimer. Mg(2+) is required as a cofactor. It depends on Mn(2+) as a cofactor.

The protein resides in the cytoplasm. The enzyme catalyses acetate + ATP = acetyl phosphate + ADP. It participates in metabolic intermediate biosynthesis; acetyl-CoA biosynthesis; acetyl-CoA from acetate: step 1/2. In terms of biological role, catalyzes the formation of acetyl phosphate from acetate and ATP. Can also catalyze the reverse reaction. This is Acetate kinase from Staphylococcus aureus (strain USA300).